Consider the following 356-residue polypeptide: Tyrosine recombinase XerS (356 aa).

One can recognise a Core-binding (CB) domain in the interval 16–121; sequence IMPWYVLDYY…ALSSLYKYLT (106 aa). Residues 169–354 enclose the Tyr recombinase domain; the sequence is AFLDYVDKEY…VNDEQKNALD (186 aa). Residues Arg210, Lys234, His306, Arg309, and His332 contribute to the active site. The O-(3'-phospho-DNA)-tyrosine intermediate role is filled by Tyr341.

It belongs to the 'phage' integrase family. XerS subfamily.

Its subcellular location is the cytoplasm. With respect to regulation, ftsK is required for recombination. In terms of biological role, site-specific tyrosine recombinase, which acts by catalyzing the cutting and rejoining of the recombining DNA molecules. Essential to convert dimers of the bacterial chromosome into monomers to permit their segregation at cell division. This Streptococcus pyogenes serotype M18 (strain MGAS8232) protein is Tyrosine recombinase XerS.